We begin with the raw amino-acid sequence, 185 residues long: ATP-dependent protease subunit HslV (185 aa).

Residue Thr-6 is part of the active site. Residues Gly-162, Cys-165, and Thr-168 each contribute to the Na(+) site.

Belongs to the peptidase T1B family. HslV subfamily. As to quaternary structure, a double ring-shaped homohexamer of HslV is capped on each side by a ring-shaped HslU homohexamer. The assembly of the HslU/HslV complex is dependent on binding of ATP.

It localises to the cytoplasm. The enzyme catalyses ATP-dependent cleavage of peptide bonds with broad specificity.. With respect to regulation, allosterically activated by HslU binding. In terms of biological role, protease subunit of a proteasome-like degradation complex believed to be a general protein degrading machinery. The sequence is that of ATP-dependent protease subunit HslV from Nitratidesulfovibrio vulgaris (strain DSM 19637 / Miyazaki F) (Desulfovibrio vulgaris).